Consider the following 254-residue polypeptide: Small ribosomal subunit protein uS5 (254 aa).

Polar residues predominate over residues 1 to 10 (MSAPEAQQQK). Residues 1–34 (MSAPEAQQQKRGGFGGRNRGRPNRRGPRNTEEKG) are disordered. The residue at position 2 (Ser2) is an N-acetylserine. Asymmetric dimethylarginine; by HMT1; alternate is present on Arg11. Omega-N-methylarginine; by HMT1; alternate is present on Arg11. Residue Arg17 is modified to Omega-N-methylarginine; by HMT1. The span at 18–27 (NRGRPNRRGP) shows a compositional bias: basic residues. Lys33 participates in a covalent cross-link: Glycyl lysine isopeptide (Lys-Gly) (interchain with G-Cter in ubiquitin). In terms of domain architecture, S5 DRBM spans 76–139 (LQDEVMNIKP…IIAKLSVIPI (64 aa)).

Belongs to the universal ribosomal protein uS5 family. As to quaternary structure, component of the small ribosomal subunit (SSU). Mature yeast ribosomes consist of a small (40S) and a large (60S) subunit. The 40S small subunit contains 1 molecule of ribosomal RNA (18S rRNA) and 33 different proteins (encoded by 57 genes). The large 60S subunit contains 3 rRNA molecules (25S, 5.8S and 5S rRNA) and 46 different proteins (encoded by 81 genes). Interacts with snoRNA U3. Interacts with MPP10. Component of the ribosomal small subunit (SSU) processome composed of at least 40 protein subunits and snoRNA U3. In terms of processing, N-terminally acetylated by acetyltransferase NatA.

Its subcellular location is the cytoplasm. The protein resides in the nucleus. It localises to the nucleolus. In terms of biological role, component of the ribosome, a large ribonucleoprotein complex responsible for the synthesis of proteins in the cell. The small ribosomal subunit (SSU) binds messenger RNAs (mRNAs) and translates the encoded message by selecting cognate aminoacyl-transfer RNA (tRNA) molecules. The large subunit (LSU) contains the ribosomal catalytic site termed the peptidyl transferase center (PTC), which catalyzes the formation of peptide bonds, thereby polymerizing the amino acids delivered by tRNAs into a polypeptide chain. The nascent polypeptides leave the ribosome through a tunnel in the LSU and interact with protein factors that function in enzymatic processing, targeting, and the membrane insertion of nascent chains at the exit of the ribosomal tunnel. uS5 is important for the assembly and function of the 40S ribosomal subunit. Mutations in this protein affects the control of translational fidelity. Involved in nucleolar processing of pre-18S ribosomal RNA and ribosome assembly. In Saccharomyces cerevisiae (strain ATCC 204508 / S288c) (Baker's yeast), this protein is Small ribosomal subunit protein uS5.